Consider the following 551-residue polypeptide: Electron transfer flavoprotein-ubiquinone oxidoreductase (551 aa).

10 to 24 (VVIVGAGPAGLSAAC) provides a ligand contact to FAD. Cys-496, Cys-520, Cys-523, and Cys-526 together coordinate [4Fe-4S] cluster. In terms of domain architecture, 4Fe-4S ferredoxin-type spans 511-540 (KRFQINAQNCVHCKTCDIKDPAQNITWVAP).

This sequence belongs to the ETF-QO/FixC family. Requires [4Fe-4S] cluster as cofactor. It depends on FAD as a cofactor.

The catalysed reaction is a ubiquinone + reduced [electron-transfer flavoprotein] = a ubiquinol + oxidized [electron-transfer flavoprotein] + H(+). Functionally, accepts electrons from ETF and reduces ubiquinone. The protein is Electron transfer flavoprotein-ubiquinone oxidoreductase of Pseudomonas aeruginosa (strain ATCC 15692 / DSM 22644 / CIP 104116 / JCM 14847 / LMG 12228 / 1C / PRS 101 / PAO1).